The following is a 409-amino-acid chain: Thiaminase-1 (409 aa).

The N-terminal stretch at M1–G29 is a signal peptide. Catalysis depends on C143, which acts as the Nucleophile. E271 serves as the catalytic Proton acceptor.

Monomer.

The protein localises to the secreted. The catalysed reaction is pyridine + thiamine = heteropyrithiamine + 5-(2-hydroxyethyl)-4-methylthiazole. Its function is as follows. Degrades thiamine by replacing its thiazole moiety with a wide range of nucleophiles. This is Thiaminase-1 from Paenibacillus thiaminolyticus (Bacillus thiaminolyticus).